Consider the following 304-residue polypeptide: Uricase (304 aa).

Alanine 2 bears the N-acetylalanine mark. N6-acetyllysine; alternate occurs at positions 10 and 23. N6-succinyllysine; alternate is present on residues lysine 10 and lysine 23. The Charge relay system role is filled by lysine 23. N6-acetyllysine occurs at positions 27 and 36. A phosphoserine mark is found at serine 39 and serine 63. The active-site Charge relay system is the threonine 68. Urate contacts are provided by threonine 68 and aspartate 69. Lysine 118, lysine 122, and lysine 164 each carry N6-acetyllysine. Phenylalanine 170 contacts urate. N6-acetyllysine occurs at positions 175 and 185. Position 187 (arginine 187) interacts with urate. An N6-acetyllysine; alternate mark is found at lysine 221 and lysine 228. Lysine 221 and lysine 228 each carry N6-succinyllysine; alternate. Serine 232 carries the phosphoserine modification. The urate site is built by valine 235, glutamine 236, and asparagine 262. Histidine 264 acts as the Charge relay system in catalysis. Lysine 278 is subject to N6-acetyllysine. The residue at position 289 (tyrosine 289) is a Phosphotyrosine. The Microbody targeting signal motif lies at 302–304; that stretch reads SRL.

The protein belongs to the uricase family.

The protein localises to the peroxisome. It carries out the reaction urate + O2 + H2O = 5-hydroxyisourate + H2O2. The protein operates within purine metabolism; urate degradation; (S)-allantoin from urate: step 1/3. Its function is as follows. Catalyzes the oxidation of uric acid to 5-hydroxyisourate, which is further processed to form (S)-allantoin. This Macaca fascicularis (Crab-eating macaque) protein is Uricase (UOX).